Here is a 387-residue protein sequence, read N- to C-terminus: NAD(P)H oxidoreductase RTN4IP1, mitochondrial (387 aa).

The transit peptide at 1–27 (MLMCRRWLVCSLRCHYRSFSFSAARRT) directs the protein to the mitochondrion. The Enoyl reductase (ER) domain maps to 38–379 (GKNDVLRFTK…QGHARGKTVV (342 aa)). NADPH-binding residues include serine 200, glycine 202, valine 203, serine 223, tyrosine 241, leucine 286, glycine 327, phenylalanine 329, histidine 372, alanine 373, and arginine 374.

This sequence belongs to the zinc-containing alcohol dehydrogenase family. Quinone oxidoreductase subfamily.

It is found in the mitochondrion matrix. The protein resides in the mitochondrion outer membrane. It carries out the reaction a 3-demethylubiquinone + NADH + 2 H(+) = a 3-demethylubiquinol + NAD(+). The catalysed reaction is a 3-demethylubiquinone + NADPH + 2 H(+) = a 3-demethylubiquinol + NADP(+). It catalyses the reaction 3-demethylubiquinone-10 + NADH + 2 H(+) = 3-demethylubiquinol-10 + NAD(+). The enzyme catalyses 3-demethylubiquinone-10 + NADPH + 2 H(+) = 3-demethylubiquinol-10 + NADP(+). It participates in cofactor biosynthesis; ubiquinone biosynthesis. Functionally, NAD(P)H oxidoreductase involved in the ubiquinone biosynthetic pathway. Required for the O-methyltransferase activity of COQ3. Able to catalyze the oxidoreduction of 3-demethylubiquinone into 3-demethylubiquinol in vitro. However, it is unclear if 3-demethylubiquinone constitutes a substrate in vivo. May also play a role in the regulation of retinal ganglion cell (RGC) neurite outgrowth, and hence in the development of the inner retina and optic nerve. In Danio rerio (Zebrafish), this protein is NAD(P)H oxidoreductase RTN4IP1, mitochondrial (rtn4ip1).